The primary structure comprises 324 residues: ATP-dependent 6-phosphofructokinase (324 aa).

Gly11 contributes to the ATP binding site. Residue 21 to 25 coordinates ADP; it reads RAVVR. ATP-binding positions include 72–73 and 102–105; these read RE and GNGS. Residue Asn103 participates in Mg(2+) binding. 126 to 128 is a substrate binding site; it reads TID. Asp128 functions as the Proton acceptor in the catalytic mechanism. Lys155 serves as a coordination point for ADP. Residues Arg163 and 170-172 contribute to the substrate site; that span reads MGR. Residues 186–188 and 214–216 contribute to the ADP site; these read GAE and KNF. Substrate is bound by residues Glu223, Arg248, and 254-257; that span reads YIQR.

The protein belongs to the phosphofructokinase type A (PFKA) family. ATP-dependent PFK group I subfamily. Prokaryotic clade 'B1' sub-subfamily. As to quaternary structure, homotetramer. It depends on Mg(2+) as a cofactor.

It localises to the cytoplasm. It catalyses the reaction beta-D-fructose 6-phosphate + ATP = beta-D-fructose 1,6-bisphosphate + ADP + H(+). The protein operates within carbohydrate degradation; glycolysis; D-glyceraldehyde 3-phosphate and glycerone phosphate from D-glucose: step 3/4. Its activity is regulated as follows. Allosterically activated by ADP and other diphosphonucleosides, and allosterically inhibited by phosphoenolpyruvate. Its function is as follows. Catalyzes the phosphorylation of D-fructose 6-phosphate to fructose 1,6-bisphosphate by ATP, the first committing step of glycolysis. This chain is ATP-dependent 6-phosphofructokinase, found in Sulfurihydrogenibium sp. (strain YO3AOP1).